The primary structure comprises 126 residues: Protein ApaG (126 aa).

In terms of domain architecture, ApaG spans 2–126 (SDPRYQIDVS…FRLAVPGALH (125 aa)).

This Pseudomonas entomophila (strain L48) protein is Protein ApaG.